The following is a 495-amino-acid chain: Meiosis-specific nuclear structural protein 1 (495 aa).

An interaction with BBOF1 region spans residues 1 to 315 (MASIRRTLSF…RLEEMLRQRE (315 aa)). Coiled coils occupy residues 61–215 (QDEQ…EKLM) and 245–361 (IEEF…QMAL). The tract at residues 172-199 (EESAAEDKRNQAKAQYSHDLEKQLEEQG) is disordered.

This sequence belongs to the MNS1 family. As to quaternary structure, able to form oligomers. Microtubule inner protein component of sperm flagellar doublet microtubules. Interacts with ODAD1. Interacts with BBOF1. Expressed in trachea multiciliated cells.

The protein resides in the nucleus. The protein localises to the cytoplasm. Its subcellular location is the cytoskeleton. It is found in the cilium axoneme. It localises to the flagellum axoneme. Functionally, microtubule inner protein (MIP) part of the dynein-decorated doublet microtubules (DMTs) in cilia axoneme, which is required for motile cilia beating. May play a role in the control of meiotic division and germ cell differentiation through regulation of pairing and recombination during meiosis. Required for sperm flagella assembly. May play a role in the assembly and function of the outer dynein arm-docking complex (ODA-DC). ODA-DC mediates outer dynein arms (ODA) binding onto the axonemal doublet microtubules. The protein is Meiosis-specific nuclear structural protein 1 (MNS1) of Bos taurus (Bovine).